The following is a 723-amino-acid chain: Probable C-mannosyltransferase DPY19L4 (723 aa).

The segment at 1–33 (MAEEEGPPVELRQRKKPKSSENKESAKEEKISD) is disordered. Residue alanine 2 is modified to N-acetylalanine. Basic and acidic residues predominate over residues 18–32 (KSSENKESAKEEKIS). A run of 12 helical transmembrane segments spans residues 52–72 (IFIG…YLSA), 161–178 (VYFY…YVTA), 184–202 (WLMS…WFVI), 222–240 (LPYF…KSNL), 260–280 (MMMW…LFLL), 292–310 (YEVY…LLQF), 316–337 (LVSP…QLNV), 349–370 (VINF…KMFV), 421–441 (LLPF…QVIF), 466–486 (IIYH…IEGL), 489–509 (IWIP…ELWM), and 522–542 (PILL…LSLW).

It belongs to the dpy-19 family. In terms of tissue distribution, widely expressed.

It localises to the membrane. Its function is as follows. Probable C-mannosyltransferase that mediates C-mannosylation of tryptophan residues on target proteins. In Homo sapiens (Human), this protein is Probable C-mannosyltransferase DPY19L4 (DPY19L4).